We begin with the raw amino-acid sequence, 160 residues long: Lipoprotein signal peptidase (160 aa).

2 helical membrane-spanning segments follow: residues 59–79 (PEGI…YVWI) and 84–104 (SPLF…NLID). Residues aspartate 113 and aspartate 139 contribute to the active site. The helical transmembrane segment at 132–152 (WPIFNIADACITIGACLLFFF) threads the bilayer.

This sequence belongs to the peptidase A8 family.

The protein resides in the cell inner membrane. The catalysed reaction is Release of signal peptides from bacterial membrane prolipoproteins. Hydrolyzes -Xaa-Yaa-Zaa-|-(S,diacylglyceryl)Cys-, in which Xaa is hydrophobic (preferably Leu), and Yaa (Ala or Ser) and Zaa (Gly or Ala) have small, neutral side chains.. It functions in the pathway protein modification; lipoprotein biosynthesis (signal peptide cleavage). Its function is as follows. This protein specifically catalyzes the removal of signal peptides from prolipoproteins. The protein is Lipoprotein signal peptidase of Chlorobaculum parvum (strain DSM 263 / NCIMB 8327) (Chlorobium vibrioforme subsp. thiosulfatophilum).